A 295-amino-acid polypeptide reads, in one-letter code: Hepatic leukemia factor (295 aa).

Residues 34 to 52 show a composition bias toward basic and acidic residues; that stretch reads LHPEDAFSKDRDKGKKLDD. 2 disordered regions span residues 34 to 69 and 93 to 160; these read LHPE…GPTL and SENG…NRNT. The region spanning 225–288 is the bZIP domain; the sequence is DDKYWARRRK…GKCKNILAKY (64 aa). The segment at 227 to 247 is basic motif; sequence KYWARRRKNNMAAKRSRDARR. The leucine-zipper stretch occupies residues 248–255; the sequence is LKENQIAI.

The protein belongs to the bZIP family. PAR subfamily. In terms of assembly, binds DNA specifically as homodimer or heterodimer with other PAR factors. As to expression, isoform HLF43 is abundant in brain, liver and kidney. Isoform HLF36 is expressed only in the liver. Both isoforms accumulate in the liver with different circadian amplitudes. Isoform HLF36 reaches peak expression levels between 8 and 12 p.m. Isoform HLF43 displays a more pronounced fluctuation through the day.

It localises to the nucleus. This chain is Hepatic leukemia factor (Hlf), found in Rattus norvegicus (Rat).